A 506-amino-acid chain; its full sequence is Anaerobic nitric oxide reductase transcription regulator NorR (506 aa).

D57 bears the 4-aspartylphosphate mark. A Sigma-54 factor interaction domain is found at 187–416 (MIGLSPAMTQ…LEHAIHRAVV (230 aa)). ATP contacts are provided by residues 215–222 (GETGTGKE) and 278–287 (ADNGTLFLDE). Residues 481-500 (WAASARALETDVANLHRLAK) constitute a DNA-binding region (H-T-H motif).

Its pathway is nitrogen metabolism; nitric oxide reduction. Functionally, required for the expression of anaerobic nitric oxide (NO) reductase, acts as a transcriptional activator for at least the norVW operon. Activation also requires sigma-54. This is Anaerobic nitric oxide reductase transcription regulator NorR from Salmonella paratyphi A (strain ATCC 9150 / SARB42).